We begin with the raw amino-acid sequence, 471 residues long: Glutamate--tRNA ligase (471 aa).

The short motif at 9 to 19 (PSPTGYLHVGG) is the 'HIGH' region element. Zn(2+)-binding residues include C98, C100, C125, and H127. The 'KMSKS' region signature appears at 237–241 (KLSKR). K240 lines the ATP pocket.

Belongs to the class-I aminoacyl-tRNA synthetase family. Glutamate--tRNA ligase type 1 subfamily. In terms of assembly, monomer. Zn(2+) is required as a cofactor.

The protein resides in the cytoplasm. It catalyses the reaction tRNA(Glu) + L-glutamate + ATP = L-glutamyl-tRNA(Glu) + AMP + diphosphate. Functionally, catalyzes the attachment of glutamate to tRNA(Glu) in a two-step reaction: glutamate is first activated by ATP to form Glu-AMP and then transferred to the acceptor end of tRNA(Glu). The chain is Glutamate--tRNA ligase from Escherichia coli O1:K1 / APEC.